The primary structure comprises 217 residues: Phosphatidylcholine synthase (217 aa).

Residues Ala-1–Leu-8 traverse the membrane as a helical segment. Over Val-9–Tyr-16 the chain is Periplasmic. The helical transmembrane segment at Ile-17–Ala-37 threads the bilayer. Residues Arg-38–Asp-50 are Cytoplasmic-facing. The helical transmembrane segment at Gly-51–Leu-71 threads the bilayer. Over Leu-72 to Met-77 the chain is Periplasmic. The chain crosses the membrane as a helical span at residues Leu-78–Phe-98. Over Cys-99–Asp-107 the chain is Cytoplasmic. The chain crosses the membrane as a helical span at residues His-108–Asn-128. A topological domain (periplasmic) is located at residue Thr-129. A helical transmembrane segment spans residues Ser-130–Val-149. Residues Lys-150–Arg-164 lie on the Cytoplasmic side of the membrane. Residues Ile-165–Leu-185 form a helical membrane-spanning segment. At Ile-186–Thr-191 the chain is on the periplasmic side. A helical membrane pass occupies residues Asn-192–Tyr-212. The Cytoplasmic portion of the chain corresponds to Arg-213–Pro-217.

This sequence belongs to the CDP-alcohol phosphatidyltransferase class-I family. Mn(2+) serves as cofactor.

Its subcellular location is the cell inner membrane. The catalysed reaction is a CDP-1,2-diacyl-sn-glycerol + choline = a 1,2-diacyl-sn-glycero-3-phosphocholine + CMP + H(+). Its function is as follows. Condenses choline with CDP-diglyceride to produce phosphatidylcholine and CMP. This chain is Phosphatidylcholine synthase, found in Legionella bozemanae (Fluoribacter bozemanae).